A 24-amino-acid polypeptide reads, in one-letter code: Ascaphin-3 (24 aa).

In terms of tissue distribution, expressed by the skin glands.

The protein localises to the secreted. Functionally, antimicrobial peptide that shows higher potency against Gram-negative bacteria than against Gram-positive bacteria. Has a very week hemolytic activity. The chain is Ascaphin-3 from Ascaphus truei (Coastal tailed frog).